The chain runs to 260 residues: Dolichol-phosphate mannosyltransferase subunit 1 (260 aa).

A2 is subject to N-acetylalanine. A phosphoserine mark is found at S3 and S9. P32, Y34, E36, I63, D65, D118, A119, D120, R147, R234, and K240 together coordinate GDP-alpha-D-mannose. A Mg(2+)-binding site is contributed by D120. D120 lines the Mn(2+) pocket.

It belongs to the glycosyltransferase 2 family. Component of the dolichol-phosphate mannose (DPM) synthase complex composed of DPM1, DPM2 and DPM3; within the complex, directly interacts with DPM3. This interaction stabilizes DPM1. Mg(2+) serves as cofactor. The cofactor is Mn(2+). Ca(2+) is required as a cofactor.

The protein resides in the endoplasmic reticulum. It carries out the reaction a di-trans,poly-cis-dolichyl phosphate + GDP-alpha-D-mannose = a di-trans,poly-cis-dolichyl beta-D-mannosyl phosphate + GDP. Its pathway is protein modification; protein glycosylation. In terms of biological role, transfers mannose from GDP-mannose to dolichol monophosphate to form dolichol phosphate mannose (Dol-P-Man) which is the mannosyl donor in pathways leading to N-glycosylation, glycosyl phosphatidylinositol membrane anchoring, and O-mannosylation of proteins; catalytic subunit of the dolichol-phosphate mannose (DPM) synthase complex. The polypeptide is Dolichol-phosphate mannosyltransferase subunit 1 (DPM1) (Homo sapiens (Human)).